A 296-amino-acid polypeptide reads, in one-letter code: GTPase Era (296 aa).

An Era-type G domain is found at 7 to 174 (KCSMSAIVGA…VDYLCETSPY (168 aa)). Residues 15-22 (GATNAGKS) are G1. 15–22 (GATNAGKS) serves as a coordination point for GTP. A G2 region spans residues 41 to 45 (QTTRV). Residues 62–65 (DTPG) form a G3 region. GTP-binding positions include 62-66 (DTPGI) and 124-127 (NKID). The interval 124–127 (NKID) is G4. The segment at 153–155 (ISA) is G5. The KH type-2 domain maps to 205 to 282 (LRHELPYSLS…HLFLFVKVRE (78 aa)).

This sequence belongs to the TRAFAC class TrmE-Era-EngA-EngB-Septin-like GTPase superfamily. Era GTPase family. In terms of assembly, monomer.

Its subcellular location is the cytoplasm. The protein localises to the cell inner membrane. Functionally, an essential GTPase that binds both GDP and GTP, with rapid nucleotide exchange. Plays a role in 16S rRNA processing and 30S ribosomal subunit biogenesis and possibly also in cell cycle regulation and energy metabolism. In Ehrlichia ruminantium (strain Welgevonden), this protein is GTPase Era.